Here is a 288-residue protein sequence, read N- to C-terminus: ATP synthase gamma chain (288 aa).

It belongs to the ATPase gamma chain family. As to quaternary structure, F-type ATPases have 2 components, CF(1) - the catalytic core - and CF(0) - the membrane proton channel. CF(1) has five subunits: alpha(3), beta(3), gamma(1), delta(1), epsilon(1). CF(0) has three main subunits: a, b and c.

The protein resides in the cell inner membrane. In terms of biological role, produces ATP from ADP in the presence of a proton gradient across the membrane. The gamma chain is believed to be important in regulating ATPase activity and the flow of protons through the CF(0) complex. In Aeromonas hydrophila subsp. hydrophila (strain ATCC 7966 / DSM 30187 / BCRC 13018 / CCUG 14551 / JCM 1027 / KCTC 2358 / NCIMB 9240 / NCTC 8049), this protein is ATP synthase gamma chain.